Consider the following 346-residue polypeptide: Transcription factor 19 (346 aa).

The 58-residue stretch at 31–88 folds into the FHA domain; the sequence is YRLGCRADLCDVALRPQQEPGFISEVHAELHAERRGDDWRVSLEDHSSQGTLVNNVRL. A Phosphoserine modification is found at S78. Disordered regions lie at residues 136–168 and 190–289; these read PRSRGEEGETRAGFRPMLPSQGAPQRPLSTLSP and LTFS…AAGG. Residues 138-147 show a composition bias toward basic and acidic residues; the sequence is SRGEEGETRA. Residues 190–208 show a composition bias toward polar residues; that stretch reads LTFSRSGSGPQNPPVSTTP. The segment covering 250 to 260 has biased composition (basic and acidic residues); that stretch reads EPRKKLLRVEK. A PHD-type zinc finger spans residues 294 to 343; it reads AAPCCCLPQEETVAWVQCDGCDTWFHVACVGCSIQAAKEADFRCPGCRVG. Residues C297, C299, C311, C314, H319, C322, C337, and C340 each coordinate Zn(2+).

The protein localises to the nucleus. Potential transcription factor that may play a role in the regulation of genes involved in cell cycle G1/S transition. May bind to regulatory elements of genes, including the promoter of the transcription factor FOXO1. This chain is Transcription factor 19 (TCF19), found in Sus scrofa (Pig).